Reading from the N-terminus, the 489-residue chain is Cytochrome P450 302a1, mitochondrial (489 aa).

Residue cysteine 434 participates in heme binding.

It belongs to the cytochrome P450 family. Heme serves as cofactor. As to expression, complex coexpression pattern of dib (disembodied) and sad (shade) in the early embryo that restricts to the prothoracic gland cells of the developing ring gland during late embryogenesis. In larvae and adult, coexpression is seen in prothoracic gland and follicle cells of the ovary. In adults, coexpression is seen in the follicle cells.

Its subcellular location is the mitochondrion membrane. It catalyses the reaction 2,22-dideoxyecdysone + 2 reduced [adrenodoxin] + O2 + 2 H(+) = 2-deoxyecdysone + 2 oxidized [adrenodoxin] + H2O. It functions in the pathway steroid biosynthesis; ecdysteroid biosynthesis. Functionally, required for CNS development; negatively regulates glial cell division in the embryonic midline. Involved in the metabolism of insect hormones; responsible for ecdysteroid C22-hydroxylase activity. May be involved in the breakdown of synthetic insecticides. The sequence is that of Cytochrome P450 302a1, mitochondrial from Drosophila melanogaster (Fruit fly).